Reading from the N-terminus, the 242-residue chain is Octanoyltransferase (242 aa).

The BPL/LPL catalytic domain occupies 31–206 (SQTTDEIWFL…LFLKNFGYNQ (176 aa)). Substrate-binding positions include 70 to 77 (RGGQVTYH), 137 to 139 (SIG), and 150 to 152 (GLA). The active-site Acyl-thioester intermediate is Cys-168.

It belongs to the LipB family.

It localises to the cytoplasm. The catalysed reaction is octanoyl-[ACP] + L-lysyl-[protein] = N(6)-octanoyl-L-lysyl-[protein] + holo-[ACP] + H(+). It participates in protein modification; protein lipoylation via endogenous pathway; protein N(6)-(lipoyl)lysine from octanoyl-[acyl-carrier-protein]: step 1/2. Its function is as follows. Catalyzes the transfer of endogenously produced octanoic acid from octanoyl-acyl-carrier-protein onto the lipoyl domains of lipoate-dependent enzymes. Lipoyl-ACP can also act as a substrate although octanoyl-ACP is likely to be the physiological substrate. The polypeptide is Octanoyltransferase (Coxiella burnetii (strain CbuG_Q212) (Coxiella burnetii (strain Q212))).